The following is an 855-amino-acid chain: Cell surface glycoprotein (855 aa).

An N-terminal signal peptide occupies residues 1–22 (MTANKQVRAVLLAALMVFSVFA). N-linked (GlcNAc...) asparagine glycosylation is found at asparagine 78, asparagine 83, asparagine 108, asparagine 167, asparagine 174, asparagine 187, asparagine 203, asparagine 227, asparagine 230, asparagine 313, asparagine 363, asparagine 441, asparagine 548, asparagine 588, asparagine 608, asparagine 620, asparagine 642, asparagine 656, and asparagine 754. The span at 782 to 802 (ETTTAAETTTTEESTETTTTE) shows a compositional bias: low complexity. The segment at 782 to 831 (ETTTAAETTTTEESTETTTTEESTEEPTETATATEEPTEEATEETTESST) is disordered. Acidic residues predominate over residues 817–827 (EPTEEATEETT). The helical transmembrane segment at 831-851 (TPGFGVVVALVALVAAALLAV) threads the bilayer. Positions 832-834 (PGF) match the PGF sorting signal motif.

This sequence belongs to the halobacterial S-layer protein family. Post-translationally, glycosylated. In terms of processing, cleaved by the archaeosortase ArtA at the C-terminus, with removal of a short hydrophobic segment. Lipidation.

The protein resides in the secreted. Its subcellular location is the cell wall. The protein localises to the S-layer. It localises to the cell membrane. In terms of biological role, S-layer protein. The S-layer is a paracrystalline mono-layered assembly of proteins which coats the surface of the cell. The protein is Cell surface glycoprotein of Haloferax gibbonsii.